We begin with the raw amino-acid sequence, 327 residues long: 2-oxoglutarate-dependent dioxygenase traH (327 aa).

The region spanning 183 to 290 (TTDAAMFLKL…YAVPAFWHGD (108 aa)) is the Fe2OG dioxygenase domain. Fe cation-binding residues include H211, D213, and H270. Position 280 (R280) interacts with 2-oxoglutarate.

It belongs to the iron/ascorbate-dependent oxidoreductase family. Fe(2+) is required as a cofactor.

The protein operates within secondary metabolite biosynthesis. 2-oxoglutarate-dependent dioxygenase; part of the tra gene cluster that produces terrestric acid. The clavatol biosynthesis cluster cla and the terrestric acid cluster tra are both involved in the production of peniphenones and penilactones. The non-reducing PKS claF is responsible for the formation of clavatol from successive condensations of 3 malonyl-CoA units, presumably with a simple acetyl-CoA starter unit, and 2 methylation steps. The esterase claE probably collaborates with claF by catalyzing the hydrolysis of ACP-bound acyl intermediates to free the ACP from stalled intermediates. The clavatol oxidase claD then converts clavatol to hydroxyclavatol. Spontaneous dehydration of hydroxyclavatol leads to the accumulation of the highly active ortho-quinone methide. On the other hand, the PKS-NRPS hybrid traA is involved in the formation of crustosic acid, with the help of traB and traD. The polyketide synthase module (PKS) of traA is responsible for the synthesis of the polyketide backbone via the condensation of an acetyl-CoA starter unit with 3 malonyl-CoA units. The downstream nonribosomal peptide synthetase (NRPS) module then amidates the carboxyl end of the polyketide with L-malic acid. Because traA lacks a designated enoylreductase (ER) domain, the required activity is provided the enoyl reductase traG. Crustosic acid undergoes decarboxylation and isomerization to the terrestric acid, catalyzed by the 2-oxoglutarate-dependent dioxygenase traH. Both acids are further converted to the 2 gamma-butyrolactones (R)-5-methyltetronic acid and (S)-5-carboxylmethyltetronic acid, with involvement of the cytochrome P450 monooxygenase claJ. Spontaneous addition of the methide to these gamma-butyrolactones leads to peniphenone D and penilactone D, which undergo again stereospecific attacking by methide to give penilactones A and B. In Penicillium crustosum (Blue mold fungus), this protein is 2-oxoglutarate-dependent dioxygenase traH.